The sequence spans 225 residues: Ribonuclease 3 (225 aa).

One can recognise an RNase III domain in the interval 5–127 (IDKLERKIGY…IIGAVYLDSD (123 aa)). Residue E40 coordinates Mg(2+). The active site involves D44. 2 residues coordinate Mg(2+): D113 and E116. E116 is a catalytic residue. In terms of domain architecture, DRBM spans 154–224 (DPKTRLQEFL…AETALEQLSN (71 aa)).

This sequence belongs to the ribonuclease III family. Homodimer. Requires Mg(2+) as cofactor.

Its subcellular location is the cytoplasm. The catalysed reaction is Endonucleolytic cleavage to 5'-phosphomonoester.. Digests double-stranded RNA. Involved in the processing of primary rRNA transcript to yield the immediate precursors to the large and small rRNAs (23S and 16S). Processes some mRNAs, and tRNAs when they are encoded in the rRNA operon. Processes pre-crRNA and tracrRNA of type II CRISPR loci if present in the organism. The sequence is that of Ribonuclease 3 from Vibrio atlanticus (strain LGP32) (Vibrio splendidus (strain Mel32)).